The chain runs to 196 residues: Phosphoheptose isomerase (196 aa).

Positions 33–192 (LIQSLKNGGK…ESECGENGNT (160 aa)) constitute an SIS domain. 48–50 (NGG) lines the substrate pocket. Zn(2+) contacts are provided by H57 and E61. Substrate contacts are provided by residues E61, 90–91 (ND), 116–118 (STS), S121, and Q168. The Zn(2+) site is built by Q168 and H176.

It belongs to the SIS family. GmhA subfamily. Homotetramer. Requires Zn(2+) as cofactor.

The protein localises to the cytoplasm. It catalyses the reaction 2 D-sedoheptulose 7-phosphate = D-glycero-alpha-D-manno-heptose 7-phosphate + D-glycero-beta-D-manno-heptose 7-phosphate. The protein operates within carbohydrate biosynthesis; D-glycero-D-manno-heptose 7-phosphate biosynthesis; D-glycero-alpha-D-manno-heptose 7-phosphate and D-glycero-beta-D-manno-heptose 7-phosphate from sedoheptulose 7-phosphate: step 1/1. Catalyzes the isomerization of sedoheptulose 7-phosphate in D-glycero-D-manno-heptose 7-phosphate. The sequence is that of Phosphoheptose isomerase from Helicobacter hepaticus (strain ATCC 51449 / 3B1).